We begin with the raw amino-acid sequence, 676 residues long: UvrABC system protein B (676 aa).

The region spanning 39 to 424 (RGILDGIPSQ…RGHIIEQIIR (386 aa)) is the Helicase ATP-binding domain. An ATP-binding site is contributed by 52–59 (GTTGSGKT). The Beta-hairpin motif lies at 105–128 (YYDYYQPEAYIARSDTYIEKSLLI). The region spanning 441 to 604 (QIDDLLEEIR…ITPKPIIKPI (164 aa)) is the Helicase C-terminal domain. Positions 611–631 (KEGAQEDSRPETQSTEDLESS) are disordered. Residues 629-664 (ESSIKQYEEAMYKAAQDFQFDEAAKYRDLMNAAKRQ) form the UVR domain.

It belongs to the UvrB family. As to quaternary structure, forms a heterotetramer with UvrA during the search for lesions. Interacts with UvrC in an incision complex.

It localises to the cytoplasm. Its function is as follows. The UvrABC repair system catalyzes the recognition and processing of DNA lesions. A damage recognition complex composed of 2 UvrA and 2 UvrB subunits scans DNA for abnormalities. Upon binding of the UvrA(2)B(2) complex to a putative damaged site, the DNA wraps around one UvrB monomer. DNA wrap is dependent on ATP binding by UvrB and probably causes local melting of the DNA helix, facilitating insertion of UvrB beta-hairpin between the DNA strands. Then UvrB probes one DNA strand for the presence of a lesion. If a lesion is found the UvrA subunits dissociate and the UvrB-DNA preincision complex is formed. This complex is subsequently bound by UvrC and the second UvrB is released. If no lesion is found, the DNA wraps around the other UvrB subunit that will check the other stand for damage. In Chlamydia muridarum (strain MoPn / Nigg), this protein is UvrABC system protein B.